We begin with the raw amino-acid sequence, 271 residues long: Centromere protein K (271 aa).

Coiled-coil stretches lie at residues 11–44 (DTIT…QNKL) and 102–151 (LRCD…VENQ).

It belongs to the CENP-K/MCM22 family. Component of the CENPA-CAD complex, composed of CENPI, CENPK, CENPL, CENPO, CENPP, CENPQ, CENPR and CENPS. The CENPA-CAD complex interacts with the CENPA-NAC complex, at least composed of CENPA, CENPC, CENPH, CENPM, CENPN, CENPT and CENPU. May interact with Sox6. As to expression, highly expressed in testis.

The protein resides in the nucleus. The protein localises to the chromosome. It is found in the centromere. It localises to the kinetochore. Its function is as follows. Component of the CENPA-CAD (nucleosome distal) complex, a complex recruited to centromeres which is involved in assembly of kinetochore proteins, mitotic progression and chromosome segregation. May be involved in incorporation of newly synthesized CENPA into centromeres via its interaction with the CENPA-NAC complex. Acts in coordination with KNL1 to recruit the NDC80 complex to the outer kinetochore. In Mus musculus (Mouse), this protein is Centromere protein K (Cenpk).